The following is a 58-amino-acid chain: ATP synthase subunit a (58 aa).

Helical transmembrane passes span 11-31 (EIFYFIGALGPLFIVLALTGL) and 35-55 (VAILQAYVFTILICIYLNDAI).

This sequence belongs to the ATPase A chain family. In terms of assembly, F-type ATPases have 2 components, CF(1) - the catalytic core - and CF(0) - the membrane proton channel. CF(1) has five subunits: alpha(3), beta(3), gamma(1), delta(1), epsilon(1). CF(0) has three main subunits: a, b and c.

It localises to the mitochondrion inner membrane. Functionally, mitochondrial membrane ATP synthase (F(1)F(0) ATP synthase or Complex V) produces ATP from ADP in the presence of a proton gradient across the membrane which is generated by electron transport complexes of the respiratory chain. F-type ATPases consist of two structural domains, F(1) - containing the extramembraneous catalytic core and F(0) - containing the membrane proton channel, linked together by a central stalk and a peripheral stalk. During catalysis, ATP synthesis in the catalytic domain of F(1) is coupled via a rotary mechanism of the central stalk subunits to proton translocation. Key component of the proton channel; it may play a direct role in the translocation of protons across the membrane. This Brassica tournefortii (Wild turnip) protein is ATP synthase subunit a (ATP6).